We begin with the raw amino-acid sequence, 493 residues long: NAD(P)H dehydrogenase (quinone) (493 aa).

FAD-binding positions include 12 to 13 (PA), 35 to 37 (DCD), 42 to 43 (AA), Lys-52, Gly-117, Asp-317, 324 to 325 (LA), and Tyr-450.

The protein belongs to the class-I pyridine nucleotide-disulfide oxidoreductase family. As to quaternary structure, homotetramer. The cofactor is FAD.

The catalysed reaction is a quinone + NADH + H(+) = a quinol + NAD(+). It catalyses the reaction a quinone + NADPH + H(+) = a quinol + NADP(+). Functionally, may contribute to virulence by increasing resistance to reactive oxygen intermediates. It can reduce 2,6-dimethyl-1,4-benzoquinone (DMBQ), 5-hydroxy-1,4-naphthaquinone (5-HNQ) and menadione. This is NAD(P)H dehydrogenase (quinone) (lpdA) from Mycobacterium tuberculosis (strain CDC 1551 / Oshkosh).